A 411-amino-acid polypeptide reads, in one-letter code: MAHPLDLNQLAQHIKQWGQSLGFQQVGICDTDLTAEEPRLQAWLDKQYHGEMAWMARHGMLRARPHELLPGTLRVISVRMNYLPAKAAFASTLNNPELGYVSRYALGRDYHKLLRQRLKKLGDQIQHYCLEQNNLDRHDLELHDLEQHDSERQGQPEQHTASEINFRPFVDSAPIMERSLAAKAGIGWVGKHSLILNRDAGSWFFLGELLIDLPLPVDKPQEEQCGRCVACMTTCPTGAIVAPYTVDARRCISYLTIELEGAIPEEFRPLMGNRIYGCDDCQLICPWNRFSQLTDEDDFSPRAVLHTPQLLDLFAWNEEKFLRVTEGSAIRRIGHLRWLRNISVALGNAPYLDSIVLALETRRGLHPMLDEHIEWAISQQLARRATQAVEVQLPQKKRLIRAIEKGLPRDA.

The Proton donor role is filled by Asp-171. In terms of domain architecture, 4Fe-4S ferredoxin-type spans 213-245 (LPLPVDKPQEEQCGRCVACMTTCPTGAIVAPYT). Residues Cys-225, Cys-228, Cys-231, Cys-235, Cys-251, Cys-278, Cys-281, and Cys-285 each coordinate [4Fe-4S] cluster.

It belongs to the QueG family. In terms of assembly, monomer. Requires cob(II)alamin as cofactor. [4Fe-4S] cluster is required as a cofactor.

The protein localises to the cytoplasm. The catalysed reaction is epoxyqueuosine(34) in tRNA + AH2 = queuosine(34) in tRNA + A + H2O. It functions in the pathway tRNA modification; tRNA-queuosine biosynthesis. Functionally, catalyzes the conversion of epoxyqueuosine (oQ) to queuosine (Q), which is a hypermodified base found in the wobble positions of tRNA(Asp), tRNA(Asn), tRNA(His) and tRNA(Tyr). The chain is Epoxyqueuosine reductase from Yersinia pestis.